The primary structure comprises 315 residues: Methionyl-tRNA formyltransferase (315 aa).

113–116 (SLLP) contacts (6S)-5,6,7,8-tetrahydrofolate.

The protein belongs to the Fmt family.

It catalyses the reaction L-methionyl-tRNA(fMet) + (6R)-10-formyltetrahydrofolate = N-formyl-L-methionyl-tRNA(fMet) + (6S)-5,6,7,8-tetrahydrofolate + H(+). Its function is as follows. Attaches a formyl group to the free amino group of methionyl-tRNA(fMet). The formyl group appears to play a dual role in the initiator identity of N-formylmethionyl-tRNA by promoting its recognition by IF2 and preventing the misappropriation of this tRNA by the elongation apparatus. The chain is Methionyl-tRNA formyltransferase from Escherichia coli O139:H28 (strain E24377A / ETEC).